A 577-amino-acid chain; its full sequence is Calcium-dependent protein kinase 22 (577 aa).

G2 carries N-myristoyl glycine lipidation. In terms of domain architecture, Protein kinase spans 105–368 (YRLGAELGRG…AKEVLEHPWL (264 aa)). Residues 111–119 (LGRGEFGVT) and K134 contribute to the ATP site. D234 serves as the catalytic Proton acceptor. Residues 374 to 404 (APNVSLGEIVRSRLMQFSAMNKFKKKALGVV) form an autoinhibitory domain region. EF-hand domains are found at residues 411 to 446 (EEMD…NGHP), 447 to 482 (VPET…IKKM), 483 to 518 (SNEE…ELGP), and 520 to 553 (EQVV…GSDW). Ca(2+)-binding residues include D424, D426, S428, N430, D435, D460, D462, N464, T466, E471, D496, D498, N500, E507, D531, D533, D535, R537, and E542.

Belongs to the protein kinase superfamily. Ser/Thr protein kinase family. CDPK subfamily.

The protein localises to the membrane. It catalyses the reaction L-seryl-[protein] + ATP = O-phospho-L-seryl-[protein] + ADP + H(+). The catalysed reaction is L-threonyl-[protein] + ATP = O-phospho-L-threonyl-[protein] + ADP + H(+). Its activity is regulated as follows. Activated by calcium. Autophosphorylation may play an important role in the regulation of the kinase activity. Functionally, may play a role in signal transduction pathways that involve calcium as a second messenger. In Oryza sativa subsp. japonica (Rice), this protein is Calcium-dependent protein kinase 22.